A 250-amino-acid polypeptide reads, in one-letter code: 5'-nucleotidase SurE (250 aa).

Positions 8, 9, 39, and 91 each coordinate a divalent metal cation.

It belongs to the SurE nucleotidase family. The cofactor is a divalent metal cation.

Its subcellular location is the cytoplasm. It carries out the reaction a ribonucleoside 5'-phosphate + H2O = a ribonucleoside + phosphate. Nucleotidase that shows phosphatase activity on nucleoside 5'-monophosphates. The protein is 5'-nucleotidase SurE of Shewanella halifaxensis (strain HAW-EB4).